Here is a 237-residue protein sequence, read N- to C-terminus: ATP-dependent dethiobiotin synthetase BioD (237 aa).

12 to 17 is a binding site for ATP; it reads DAGKTL. Mg(2+) is bound at residue threonine 16. Lysine 37 is a catalytic residue. Serine 41 provides a ligand contact to substrate. ATP is bound by residues aspartate 54, 116-119, and 213-215; these read EGAG and PRL. The Mg(2+) site is built by aspartate 54 and glutamate 116.

The protein belongs to the dethiobiotin synthetase family. In terms of assembly, homodimer. Mg(2+) is required as a cofactor.

It localises to the cytoplasm. The enzyme catalyses (7R,8S)-7,8-diammoniononanoate + CO2 + ATP = (4R,5S)-dethiobiotin + ADP + phosphate + 3 H(+). The protein operates within cofactor biosynthesis; biotin biosynthesis; biotin from 7,8-diaminononanoate: step 1/2. Its function is as follows. Catalyzes a mechanistically unusual reaction, the ATP-dependent insertion of CO2 between the N7 and N8 nitrogen atoms of 7,8-diaminopelargonic acid (DAPA, also called 7,8-diammoniononanoate) to form a ureido ring. This Chromohalobacter salexigens (strain ATCC BAA-138 / DSM 3043 / CIP 106854 / NCIMB 13768 / 1H11) protein is ATP-dependent dethiobiotin synthetase BioD.